The chain runs to 123 residues: Small ribosomal subunit protein uS12 (123 aa).

Positions 1 to 32 (MPTINQLIRKPREAQKARDKAPALQSSPQKRG) are disordered. Residues 10–21 (KPREAQKARDKA) show a composition bias toward basic and acidic residues. D89 is modified (3-methylthioaspartic acid).

It belongs to the universal ribosomal protein uS12 family. In terms of assembly, part of the 30S ribosomal subunit. Contacts proteins S8 and S17. May interact with IF1 in the 30S initiation complex.

Functionally, with S4 and S5 plays an important role in translational accuracy. Its function is as follows. Interacts with and stabilizes bases of the 16S rRNA that are involved in tRNA selection in the A site and with the mRNA backbone. Located at the interface of the 30S and 50S subunits, it traverses the body of the 30S subunit contacting proteins on the other side and probably holding the rRNA structure together. The combined cluster of proteins S8, S12 and S17 appears to hold together the shoulder and platform of the 30S subunit. The chain is Small ribosomal subunit protein uS12 from Azorhizobium caulinodans (strain ATCC 43989 / DSM 5975 / JCM 20966 / LMG 6465 / NBRC 14845 / NCIMB 13405 / ORS 571).